The following is a 405-amino-acid chain: Succinyl-CoA--L-malate CoA-transferase beta subunit (405 aa).

Asp-175 functions as the Nucleophile in the catalytic mechanism.

The protein belongs to the CoA-transferase III family. In terms of assembly, forms a large complex composed of six heterodimers (alpha, beta).

It carries out the reaction succinyl-CoA + (S)-malate = (S)-malyl-CoA + succinate. The enzyme catalyses (3S)-citramalate + succinyl-CoA = (3S)-citramalyl-CoA + succinate. In terms of biological role, involved in the 3-hydroxypropionate cycle used for autotrophic carbon dioxide fixation. Catalyzes the transfer of CoA moiety from succinyl-CoA to L-malate to yield L-malyl-CoA. This chain is Succinyl-CoA--L-malate CoA-transferase beta subunit (smtB), found in Chloroflexus aurantiacus (strain ATCC 29366 / DSM 635 / J-10-fl).